A 1246-amino-acid polypeptide reads, in one-letter code: Stromal processing peptidase, chloroplastic (1246 aa).

Residues 1–136 constitute a chloroplast transit peptide; that stretch reads MASFPSPPLA…AKIRRRHVLH (136 aa). Residue His228 participates in Zn(2+) binding. Residue Glu231 is the Proton acceptor of the active site. A Zn(2+)-binding site is contributed by His232. Glu302 is an active-site residue. Residue Glu309 participates in Zn(2+) binding.

It belongs to the peptidase M16 family. Requires Zn(2+) as cofactor.

It is found in the plastid. The protein localises to the chloroplast stroma. Functionally, cleaves presequences (transit peptides) from chloroplastic protein precursors. Initially recognizes a precursor by binding to the C-terminus of its transit peptide and then removes the transit peptide in a single endoproteolytic step. In a next step, pursues the cleavage of transit peptide to a subfragment form. The polypeptide is Stromal processing peptidase, chloroplastic (Oryza sativa subsp. japonica (Rice)).